Consider the following 704-residue polypeptide: Serotransferrin (704 aa).

Positions 1–19 (MRPAVRALLACAVLGLCLA) are cleaved as a signal peptide. Transferrin-like domains lie at 25 to 351 (VRWC…NLRE) and 364 to 689 (VKWC…NLRQ). 2 cysteine pairs are disulfide-bonded: cysteine 28–cysteine 66 and cysteine 38–cysteine 57. The residue at position 42 (arginine 42) is a Dimethylated arginine. Fe(3+) is bound by residues aspartate 81 and tyrosine 113. 5 disulfides stabilise this stretch: cysteine 136/cysteine 217, cysteine 176/cysteine 192, cysteine 179/cysteine 200, cysteine 189/cysteine 202, and cysteine 250/cysteine 264. Hydrogencarbonate contacts are provided by threonine 138, arginine 142, alanine 144, and glycine 145. Tyrosine 211 is a binding site for Fe(3+). Histidine 272 contacts Fe(3+). 11 disulfide bridges follow: cysteine 362–cysteine 622, cysteine 367–cysteine 399, cysteine 377–cysteine 390, cysteine 424–cysteine 699, cysteine 441–cysteine 663, cysteine 473–cysteine 549, cysteine 497–cysteine 690, cysteine 507–cysteine 521, cysteine 518–cysteine 532, cysteine 589–cysteine 603, and cysteine 641–cysteine 646. Fe(3+) contacts are provided by aspartate 414 and tyrosine 449. Hydrogencarbonate-binding residues include threonine 475, arginine 479, alanine 481, and glycine 482. N-linked (GlcNAc...) asparagine glycosylation is present at asparagine 514. Tyrosine 543 provides a ligand contact to Fe(3+). A Fe(3+)-binding site is contributed by histidine 611. Serine 691 carries the phosphoserine modification.

Belongs to the transferrin family. In terms of assembly, monomer. Part of a complex composed of SLC40A1/ferroportin, TF/transferrin and HEPH/hephaestin that transfers iron from cells to transferrin. As to expression, expressed by the liver and secreted in plasma.

The protein resides in the secreted. Functionally, transferrins are iron binding transport proteins which can bind two Fe(3+) ions in association with the binding of an anion, usually bicarbonate. It is responsible for the transport of iron from sites of absorption and heme degradation to those of storage and utilization. Serum transferrin may also have a further role in stimulating cell proliferation. In Bos taurus (Bovine), this protein is Serotransferrin (TF).